We begin with the raw amino-acid sequence, 517 residues long: G-protein coupled receptor Mth (517 aa).

A signal peptide spans 1-27 (MKLFWVKRLLRISTVVVTLLLLQRTNA). The Extracellular portion of the chain corresponds to 28–221 (AIPDCDYYDT…CLISPSRMGQ (194 aa)). 5 disulfide bridges follow: Cys-32/Cys-86, Cys-88/Cys-93, Cys-97/Cys-191, Cys-98/Cys-109, and Cys-153/Cys-212. Asn-48 and Asn-61 each carry an N-linked (GlcNAc...) asparagine glycan. N-linked (GlcNAc...) asparagine glycans are attached at residues Asn-126, Asn-173, and Asn-201. Residues 222–242 (TVVMITSLVCMVLTITVYLFV) traverse the membrane as a helical segment. Residues 243 to 251 (KKLQNLHGK) lie on the Cytoplasmic side of the membrane. A helical transmembrane segment spans residues 252 to 272 (CFMCYMVCLFMAYLLLLLNLW). The Extracellular portion of the chain corresponds to 273–279 (QMSQNFC). A helical transmembrane segment spans residues 280-300 (ITAGFLGYFFVMAAFLWLSVI). Over 301–323 (SLHLWNTFSGSAHNANRFLSEHR) the chain is Cytoplasmic. A helical membrane pass occupies residues 324 to 344 (FLAYNTYAWGMAVVLTGITYL). Residues 345-373 (ADKVVENEDWNPRMGFGGHCWICTQSWSA) are Extracellular-facing. Residues 374 to 394 (MLYFYGPMVFLIAFNITMFIL) traverse the membrane as a helical segment. At 395 to 427 (TANRIIGVKKDIQKFAHRQERKQKLNSDKQTYT) the chain is on the cytoplasmic side. A helical membrane pass occupies residues 428–448 (FFLRLFIIMGLTWSLEIGSYI). Residues 449–457 (SQFNQTWSN) lie on the Extracellular side of the membrane. A glycan (N-linked (GlcNAc...) asparagine) is linked at Asn-452. The chain crosses the membrane as a helical span at residues 458 to 478 (VFLVADYLNWSQGIIIFILFV). Topologically, residues 479 to 517 (LKRSTLRLLMESIRGEGEEVNDSEEEISLENTKYDRNVL) are cytoplasmic.

This sequence belongs to the G-protein coupled receptor 2 family. Mth subfamily. In terms of assembly, homodimer.

The protein localises to the cell membrane. In terms of biological role, involved in biological aging and stress response. Essential for adult survival. The polypeptide is G-protein coupled receptor Mth (mth) (Drosophila yakuba (Fruit fly)).